Consider the following 168-residue polypeptide: WAP four-disulfide core domain protein 2 (168 aa).

The N-terminal stretch at 1–30 is a signal peptide; that stretch reads MPACRLCLLATGLLLGLLLFTPLSATGTRA. WAP domains are found at residues 31-74 and 119-167; these read EKPG…SKPN and NGEK…TTPK. 4 disulfides stabilise this stretch: cysteine 36/cysteine 62, cysteine 45/cysteine 66, cysteine 49/cysteine 61, and cysteine 55/cysteine 70. Positions 100–123 are disordered; the sequence is PLSRGQVSTKPPVVTKEGGNGEKQ. 4 cysteine pairs are disulfide-bonded: cysteine 126/cysteine 154, cysteine 137/cysteine 158, cysteine 141/cysteine 153, and cysteine 147/cysteine 163.

As to quaternary structure, homotrimer; disulfide-linked.

It localises to the secreted. Functionally, broad range protease inhibitor. The chain is WAP four-disulfide core domain protein 2 (Wfdc2) from Rattus norvegicus (Rat).